We begin with the raw amino-acid sequence, 1792 residues long: uncharacterized protein (1792 aa).

The segment covering M1–N28 has biased composition (low complexity). Disordered stretches follow at residues M1–G34, T162–H187, K440–S461, V544–N568, N736–N777, T837–K979, V1044–S1071, N1084–K1106, T1160–R1215, N1257–G1290, L1651–K1686, P1704–K1731, and I1742–N1761. Polar residues predominate over residues K169–K182. Positions K550–T559 are enriched in basic residues. Positions P741 to S776 are enriched in low complexity. Residues K838–K847 show a composition bias toward basic residues. Residues N856–I873 show a composition bias toward basic and acidic residues. A compositionally biased stretch (low complexity) spans N874–N924. Basic residues predominate over residues K943–K954. Residues I955–Q966 show a composition bias toward basic and acidic residues. Positions S1045 to P1057 are enriched in low complexity. 3 stretches are compositionally biased toward basic and acidic residues: residues T1060–S1071, E1088–K1106, and N1166–D1192. Positions R1205–R1215 are enriched in basic residues. Residues N1261–N1289 show a composition bias toward low complexity. Composition is skewed to basic residues over residues K1660–K1686 and P1704–K1717.

This is an uncharacterized protein from Plasmodium falciparum (isolate 3D7).